A 208-amino-acid chain; its full sequence is dITP/XTP pyrophosphatase (208 aa).

11-16 (TGNAKK) provides a ligand contact to substrate. D73 serves as the catalytic Proton acceptor. D73 serves as a coordination point for Mg(2+). Substrate-binding positions include S74, 157–160 (FGYD), K180, and 185–186 (HR).

Belongs to the HAM1 NTPase family. As to quaternary structure, homodimer. Requires Mg(2+) as cofactor.

It catalyses the reaction XTP + H2O = XMP + diphosphate + H(+). The catalysed reaction is dITP + H2O = dIMP + diphosphate + H(+). It carries out the reaction ITP + H2O = IMP + diphosphate + H(+). Its function is as follows. Pyrophosphatase that catalyzes the hydrolysis of nucleoside triphosphates to their monophosphate derivatives, with a high preference for the non-canonical purine nucleotides XTP (xanthosine triphosphate), dITP (deoxyinosine triphosphate) and ITP. Seems to function as a house-cleaning enzyme that removes non-canonical purine nucleotides from the nucleotide pool, thus preventing their incorporation into DNA/RNA and avoiding chromosomal lesions. This Rhodopirellula baltica (strain DSM 10527 / NCIMB 13988 / SH1) protein is dITP/XTP pyrophosphatase.